The following is a 674-amino-acid chain: Translation factor GUF1, mitochondrial (674 aa).

The transit peptide at 1-48 directs the protein to the mitochondrion; the sequence is MRGCLQPARWLTTATLRRPLLSCPRQLPTRYNPFPRPFHHAPVLQARQ. The tr-type G domain occupies 66-246; the sequence is ERYRNFCIVA…AIIESIPALL (181 aa). GTP is bound by residues 75-82, 139-143, and 193-196; these read AHVDHGKS, DTPGH, and NKVD.

The protein belongs to the TRAFAC class translation factor GTPase superfamily. Classic translation factor GTPase family. LepA subfamily.

The protein localises to the mitochondrion inner membrane. The catalysed reaction is GTP + H2O = GDP + phosphate + H(+). Functionally, promotes mitochondrial protein synthesis. May act as a fidelity factor of the translation reaction, by catalyzing a one-codon backward translocation of tRNAs on improperly translocated ribosomes. Binds to mitochondrial ribosomes in a GTP-dependent manner. The polypeptide is Translation factor GUF1, mitochondrial (Arthroderma otae (strain ATCC MYA-4605 / CBS 113480) (Microsporum canis)).